Consider the following 185-residue polypeptide: Ribosome-recycling factor (185 aa).

Residues 138-159 are disordered; the sequence is KVKKLEKDKEISEDESKKAQEQ.

Belongs to the RRF family.

The protein localises to the cytoplasm. Its function is as follows. Responsible for the release of ribosomes from messenger RNA at the termination of protein biosynthesis. May increase the efficiency of translation by recycling ribosomes from one round of translation to another. This Helicobacter acinonychis (strain Sheeba) protein is Ribosome-recycling factor.